A 2048-amino-acid polypeptide reads, in one-letter code: Fanconi anemia group M protein (2048 aa).

Positions 1–37 (MSGRQRTLFQTWGSSISRSSGTPGCSSGTERPQSPGS) are enriched in polar residues. A disordered region spans residues 1–45 (MSGRQRTLFQTWGSSISRSSGTPGCSSGTERPQSPGSSKAPLPAA). A Phosphoserine modification is found at S34. A Helicase ATP-binding domain is found at 98 to 266 (ISRAALFCNT…QVITNLLIGQ (169 aa)). 111 to 118 (LPTGLGKT) is a binding site for ATP. The DEAH box motif lies at 214–217 (DEAH). A Helicase C-terminal domain is found at 452–627 (KLEEVVIEHF…VLHFYQRSPR (176 aa)). The tract at residues 661–800 (SIFSYRDGMR…TSTFIAPRNE (140 aa)) is interaction with CENPS/CENPSX. Disordered regions lie at residues 1433-1476 (NVLN…NFPK), 1518-1540 (LSEEDAEYVSSDENDESENEQDS), and 1668-1809 (ILPD…HTSL). The span at 1518-1538 (LSEEDAEYVSSDENDESENEQ) shows a compositional bias: acidic residues. Phosphoserine is present on residues S1673 and S1674. Polar residues-rich tracts occupy residues 1703-1745 (HCLN…ISEV), 1753-1767 (HNEVQSTTPPFTTVD), and 1786-1797 (EDSSTSGASCSK). The tract at residues 1727-2048 (LAKQSKQTSL…LNQDRLKSDI (322 aa)) is interaction with FAAP24.

This sequence belongs to the DEAD box helicase family. DEAH subfamily. FANCM sub-subfamily. Component of the Fanconi anemia (FA) core complex, which consists of CENPS, CENPX, FANCA, FANCB, FANCC, FANCE, FANCF, FANCG, FANCL, FANCM, FAAP24 and FAAP100. The FA core complex associates with Bloom syndrome (BLM) complex, which consists of at least BLM, DNA topoisomerase 3-alpha/TOP3A, RMI1/BLAP75, RPA1/RPA70 and RPA2/RPA32. This supercomplex between FA and BLM complexes has been called BRAFT. Forms a discrete complex with CENPS and CENPX, called FANCM-MHF; this interaction stimulates DNA binding and replication fork remodeling by FANCM and stabilizes the binding partners. Forms a heterodimer with FAAP24; this interaction increases FANCM single-stranded DNA-binding activity. Post-translationally, phosphorylated; hyperphosphorylated in response to genotoxic stress. Expressed in germ cells of fetal and adult ovaries. In fetal ovaries, it is present in oogonia but expression is stronger in pachytene stage oocytes. Expressed in oocytes arrested at the diplotene stage of prophase I during the last trimester of pregnancy and in adults. Expressed in the testis.

Its subcellular location is the nucleus. It carries out the reaction ATP + H2O = ADP + phosphate + H(+). Its function is as follows. DNA-dependent ATPase component of the Fanconi anemia (FA) core complex. Required for the normal activation of the FA pathway, leading to monoubiquitination of the FANCI-FANCD2 complex in response to DNA damage, cellular resistance to DNA cross-linking drugs, and prevention of chromosomal breakage. In complex with CENPS and CENPX, binds double-stranded DNA (dsDNA), fork-structured DNA (fsDNA) and Holliday junction substrates. Its ATP-dependent DNA branch migration activity can process branched DNA structures such as a movable replication fork. This activity is strongly stimulated in the presence of CENPS and CENPX. In complex with FAAP24, efficiently binds to single-strand DNA (ssDNA), splayed-arm DNA, and 3'-flap substrates. In vitro, on its own, strongly binds ssDNA oligomers and weakly fsDNA, but does not bind to dsDNA. The sequence is that of Fanconi anemia group M protein (FANCM) from Homo sapiens (Human).